The sequence spans 343 residues: S-adenosylmethionine:tRNA ribosyltransferase-isomerase (343 aa).

This sequence belongs to the QueA family. In terms of assembly, monomer.

It is found in the cytoplasm. It carries out the reaction 7-aminomethyl-7-carbaguanosine(34) in tRNA + S-adenosyl-L-methionine = epoxyqueuosine(34) in tRNA + adenine + L-methionine + 2 H(+). It functions in the pathway tRNA modification; tRNA-queuosine biosynthesis. Functionally, transfers and isomerizes the ribose moiety from AdoMet to the 7-aminomethyl group of 7-deazaguanine (preQ1-tRNA) to give epoxyqueuosine (oQ-tRNA). In Pseudoalteromonas translucida (strain TAC 125), this protein is S-adenosylmethionine:tRNA ribosyltransferase-isomerase.